The following is a 53-amino-acid chain: Conotoxin Cal6.31 (53 aa).

The first 24 residues, M1 to A24, serve as a signal peptide directing secretion. 3 cysteine pairs are disulfide-bonded: C29–C43, C36–C47, and C42–C51.

This sequence belongs to the conotoxin O1 superfamily. As to expression, expressed by the venom duct.

The protein localises to the secreted. Functionally, probable neurotoxin. This is Conotoxin Cal6.31 from Californiconus californicus (California cone).